Reading from the N-terminus, the 508-residue chain is Mevalonate kinase ERG12 (508 aa).

The disordered stretch occupies residues 1-46 (MPPSNPAMVNGLNGSHANGNGNGHNHISDSGSETSGESSNGSGRRR). Positions 10-42 (NGLNGSHANGNGNGHNHISDSGSETSGESSNGS) are enriched in low complexity. Residues lysine 68, serine 200, and 205–211 (GAGLGSS) contribute to the ATP site. Mg(2+) contacts are provided by serine 211 and glutamate 256. Aspartate 267 functions as the Proton acceptor in the catalytic mechanism.

Belongs to the GHMP kinase family. Mevalonate kinase subfamily. Homodimer. The cofactor is Mg(2+).

It localises to the cytoplasm. It is found in the cytosol. It catalyses the reaction (R)-mevalonate + ATP = (R)-5-phosphomevalonate + ADP + H(+). It functions in the pathway isoprenoid biosynthesis; isopentenyl diphosphate biosynthesis via mevalonate pathway; isopentenyl diphosphate from (R)-mevalonate: step 1/3. In terms of biological role, mevalonate kinase; part of the second module of ergosterol biosynthesis pathway that includes the middle steps of the pathway. ERG12 converts mevalonate into 5-phosphomevalonate. The second module is carried out in the vacuole and involves the formation of farnesyl diphosphate, which is also an important intermediate in the biosynthesis of ubiquinone, dolichol, heme and prenylated proteins. Activity by the mevalonate kinase ERG12 (FG05912) first converts mevalonate into 5-phosphomevalonate. 5-phosphomevalonate is then further converted to 5-diphosphomevalonate by the phosphomevalonate kinase ERG8 (FG09764). The diphosphomevalonate decarboxylase ERG19 (FG10424) then produces isopentenyl diphosphate. The isopentenyl-diphosphate delta-isomerase IDI1 (FG09722) then catalyzes the 1,3-allylic rearrangement of the homoallylic substrate isopentenyl (IPP) to its highly electrophilic allylic isomer, dimethylallyl diphosphate (DMAPP). Finally the farnesyl diphosphate synthase ERG20 (FG06784) catalyzes the sequential condensation of isopentenyl pyrophosphate with dimethylallyl pyrophosphate, and then with the resultant geranylpyrophosphate to the ultimate product farnesyl pyrophosphate. In Gibberella zeae (strain ATCC MYA-4620 / CBS 123657 / FGSC 9075 / NRRL 31084 / PH-1) (Wheat head blight fungus), this protein is Mevalonate kinase ERG12.